Consider the following 227-residue polypeptide: Phosphoribosylformylglycinamidine synthase subunit PurQ (227 aa).

In terms of domain architecture, Glutamine amidotransferase type-1 spans 2–226 (KFAVIQFPGS…VQAWKEEQVN (225 aa)). Residue cysteine 86 is the Nucleophile of the active site. Catalysis depends on residues histidine 195 and glutamate 197.

As to quaternary structure, part of the FGAM synthase complex composed of 1 PurL, 1 PurQ and 2 PurS subunits.

It localises to the cytoplasm. It catalyses the reaction N(2)-formyl-N(1)-(5-phospho-beta-D-ribosyl)glycinamide + L-glutamine + ATP + H2O = 2-formamido-N(1)-(5-O-phospho-beta-D-ribosyl)acetamidine + L-glutamate + ADP + phosphate + H(+). The enzyme catalyses L-glutamine + H2O = L-glutamate + NH4(+). Its pathway is purine metabolism; IMP biosynthesis via de novo pathway; 5-amino-1-(5-phospho-D-ribosyl)imidazole from N(2)-formyl-N(1)-(5-phospho-D-ribosyl)glycinamide: step 1/2. Its function is as follows. Part of the phosphoribosylformylglycinamidine synthase complex involved in the purines biosynthetic pathway. Catalyzes the ATP-dependent conversion of formylglycinamide ribonucleotide (FGAR) and glutamine to yield formylglycinamidine ribonucleotide (FGAM) and glutamate. The FGAM synthase complex is composed of three subunits. PurQ produces an ammonia molecule by converting glutamine to glutamate. PurL transfers the ammonia molecule to FGAR to form FGAM in an ATP-dependent manner. PurS interacts with PurQ and PurL and is thought to assist in the transfer of the ammonia molecule from PurQ to PurL. This chain is Phosphoribosylformylglycinamidine synthase subunit PurQ, found in Listeria welshimeri serovar 6b (strain ATCC 35897 / DSM 20650 / CCUG 15529 / CIP 8149 / NCTC 11857 / SLCC 5334 / V8).